We begin with the raw amino-acid sequence, 377 residues long: Spermidine/putrescine import ATP-binding protein PotA (377 aa).

Residues 22–252 (VRLQNVTKRF…PANRFVADFI (231 aa)) form the ABC transporter domain. 54–61 (GPSGCGKT) is an ATP binding site.

It belongs to the ABC transporter superfamily. Spermidine/putrescine importer (TC 3.A.1.11.1) family. The complex is composed of two ATP-binding proteins (PotA), two transmembrane proteins (PotB and PotC) and a solute-binding protein (PotD).

It is found in the cell membrane. It catalyses the reaction ATP + H2O + polyamine-[polyamine-binding protein]Side 1 = ADP + phosphate + polyamineSide 2 + [polyamine-binding protein]Side 1.. In terms of biological role, part of the ABC transporter complex PotABCD involved in spermidine/putrescine import. Responsible for energy coupling to the transport system. The chain is Spermidine/putrescine import ATP-binding protein PotA from Rubrobacter xylanophilus (strain DSM 9941 / JCM 11954 / NBRC 16129 / PRD-1).